The chain runs to 288 residues: MKLPIFIADAFTATAFRGNPAAVCLLERTLDEDAHQDIAREMNLSETAFVRKLQPTDDFTQSSRFGLRWFTPEAEFPLCGHATLASAAVLFQKRKNTNSTLTFVTMSGELKARREEDGIVLDFPVYPTFPQDFHEVEDLIKAAIGDTLVQDIRYSPDTKNLLVRLSDSYDRSFLESLKVNTEPLPAIEKTGKVRGLILTVKGEPGGQTALYDFYSRCFAPWVGVAEDPVTGSTHTLLGPYWSEELGKKEMRAFQCSRRGGELDINLRPDGRVDIKGGAVIVLEGTLTA.

Glu46 is an active-site residue.

It belongs to the PhzF family.

In Mus musculus (Mouse), this protein is Phenazine biosynthesis-like domain-containing protein 2 (Pbld2).